We begin with the raw amino-acid sequence, 403 residues long: Phosphomevalonate dehydratase large subunit (403 aa).

(R)-5-phosphomevalonate is bound by residues Gly48, Val49, Ser50, Asn79, and Pro80. Cys119 contributes to the [4Fe-4S] cluster binding site. Residues Glu138 and Ser139 each coordinate (R)-5-phosphomevalonate. Cys301 and Cys358 together coordinate [4Fe-4S] cluster. Lys378 provides a ligand contact to (R)-5-phosphomevalonate.

This sequence belongs to the AcnX type II large subunit family. As to quaternary structure, heterodimer composed of a large subunit (PMDh-L) and a small subunit (PMDh-S). [4Fe-4S] cluster is required as a cofactor.

It catalyses the reaction (R)-5-phosphomevalonate = (2E)-3-methyl-5-phosphooxypent-2-enoate + H2O. It participates in isoprenoid biosynthesis; isopentenyl diphosphate biosynthesis via mevalonate pathway. Its function is as follows. Component of a hydro-lyase that catalyzes the dehydration of mevalonate 5-phosphate (MVA5P) to form trans-anhydromevalonate 5-phosphate (tAHMP). Involved in the archaeal mevalonate (MVA) pathway, which provides fundamental precursors for isoprenoid biosynthesis, such as isopentenyl diphosphate (IPP) and dimethylallyl diphosphate (DMAPP). The sequence is that of Phosphomevalonate dehydratase large subunit from Methanocaldococcus jannaschii (strain ATCC 43067 / DSM 2661 / JAL-1 / JCM 10045 / NBRC 100440) (Methanococcus jannaschii).